The sequence spans 143 residues: UPF0201 protein PAE1632 (143 aa).

The protein belongs to the UPF0201 family.

The sequence is that of UPF0201 protein PAE1632 from Pyrobaculum aerophilum (strain ATCC 51768 / DSM 7523 / JCM 9630 / CIP 104966 / NBRC 100827 / IM2).